Here is an 806-residue protein sequence, read N- to C-terminus: ATP-dependent zinc metalloprotease FTSH 9, chloroplastic (806 aa).

The transit peptide at 1–62 directs the protein to the chloroplast; sequence MTSIELLSPL…SSIQLPQSVP (62 aa). Residues 84–116 are disordered; the sequence is SSRTIVNCQEGDQKASSSEGEGKTNKDKGRKQG. The next 2 membrane-spanning stretches (helical) occupy residues 133–153 and 271–291; these read IIQA…MFVV and GGFF…AGLL. 369–376 is an ATP binding site; the sequence is GLPGTGKT. Histidine 594 lines the Zn(2+) pocket. The active site involves glutamate 595. Zn(2+)-binding residues include histidine 598 and aspartate 677.

In the N-terminal section; belongs to the AAA ATPase family. This sequence in the C-terminal section; belongs to the peptidase M41 family. Requires Zn(2+) as cofactor.

The protein resides in the plastid. The protein localises to the chloroplast thylakoid membrane. In terms of biological role, probable ATP-dependent zinc metallopeptidase. This Arabidopsis thaliana (Mouse-ear cress) protein is ATP-dependent zinc metalloprotease FTSH 9, chloroplastic (FTSH9).